Reading from the N-terminus, the 225-residue chain is Cytidylate kinase (225 aa).

11–19 (GPAAAGKST) is an ATP binding site.

This sequence belongs to the cytidylate kinase family. Type 1 subfamily.

Its subcellular location is the cytoplasm. It catalyses the reaction CMP + ATP = CDP + ADP. The enzyme catalyses dCMP + ATP = dCDP + ADP. The sequence is that of Cytidylate kinase from Bacillus cereus (strain B4264).